The primary structure comprises 97 residues: MTLFSSISSISNPMTSSKSSISSFGSGTSMGSNSIACGGGCGGSGGILGLGLGLGLGLDLTGGSRSRGACGNGGNSGNGNGGMGGGNGPCCGGCCGI.

The interval 1 to 29 is disordered; sequence MTLFSSISSISNPMTSSKSSISSFGSGTS.

This sequence belongs to the hssA/B family.

In Dictyostelium discoideum (Social amoeba), this protein is HssA/B-like protein 38 (hssl38).